The primary structure comprises 234 residues: Bradykinin-releasing enzyme KR-E-1 (234 aa).

The Peptidase S1 domain maps to 1–225 (VIGGDECNIN…YSDWIQSIIA (225 aa)). Disulfide bonds link Cys-7-Cys-139, Cys-26-Cys-42, Cys-74-Cys-232, Cys-118-Cys-186, Cys-150-Cys-165, and Cys-176-Cys-201. An N-linked (GlcNAc...) asparagine glycan is attached at Asn-20. Catalysis depends on charge relay system residues His-41 and Asp-86. Ser-180 acts as the Charge relay system in catalysis.

It belongs to the peptidase S1 family. Snake venom subfamily. In terms of assembly, monomer. In terms of tissue distribution, expressed by the venom gland.

Its subcellular location is the secreted. Functionally, bradykinin-releasing enzyme. Releases bradykinin from bovine HMW kininogen. Has anticoagulant activity. Increases permeability of capillaries by intradermal injection into rabbits. The sequence is that of Bradykinin-releasing enzyme KR-E-1 from Gloydius ussuriensis (Ussuri mamushi).